We begin with the raw amino-acid sequence, 1062 residues long: Inversin (1062 aa).

16 ANK repeats span residues 13 to 42 (SLAS…ALRD), 47 to 76 (FGRT…DVNK), 80 to 110 (SRRT…WMQK), 113 to 144 (EEMT…EVDT), 148 to 177 (NKQT…NIGI), 181 to 213 (EGKI…TESL), 220 to 250 (EGRT…NITS), 254 to 283 (LFRT…SGTI), 288 to 317 (QGAT…VKDD), 321 to 350 (EGRT…DIDI), 356 to 385 (YGGT…QVDA), 389 to 418 (MKHT…RVDL), 422 to 451 (DGHS…NPNV), 455 to 484 (AGRT…DPNI), 488 to 517 (EGRT…FPNQ), and 523 to 553 (ERYT…SIAA). Asn75 carries the 3-hydroxyasparagine modification. A D-box 1 motif is present at residues 490 to 498 (RTALHWSCN). The IQ 1 domain maps to 555-584 (QDIAAFKIQAVYKGYKVRKAFRDRKNLLMK). Over residues 589 to 608 (RKDAAAKKREEENKRKEAEQ) the composition is skewed to basic and acidic residues. The interval 589-849 (RKDAAAKKRE…QDKLIGGVSS (261 aa)) is disordered. Polar residues-rich tracts occupy residues 636-658 (QNEG…TVQS) and 676-689 (QGDS…TASR). Positions 690 to 700 (KPSETPIEHCR) are enriched in basic and acidic residues. The span at 713–724 (GGNSSKNQGTSS) shows a compositional bias: polar residues. Basic and acidic residues-rich tracts occupy residues 725–741 (VEKR…RCEE) and 775–788 (DHPR…DRAA). Residues 907-915 (RKELFRRKN) carry the D-box 2 motif. Residues 914–943 (KNKAAAVIQRAWRSYQLRKHLSRLLHLKQL) form the IQ 2 domain. The interval 1042–1062 (RSKKFSYNLQPSSQSKNKPKL) is disordered. The segment covering 1046 to 1062 (FSYNLQPSSQSKNKPKL) has biased composition (polar residues).

Interacts with microtubules. Interacts with NPHP1. Interacts with DVL1, PRICKLE (PRICKLE1 or PRICKLE2) and Strabismus (VANGL1 or VANGL2). Binds calmodulin via its IQ domains. Interacts with APC2. Interacts with alpha-, beta-, and gamma-catenin. Interacts with N-cadherin (CDH2). Interacts with NPHP3. Interacts with IQCB1; the interaction likely requires additional interactors. Component of a complex containing at least ANKS6, INVS, NEK8 and NPHP3. ANKS6 may organize complex assembly by linking INVS and NPHP3 to NEK8 and INVS may target the complex to the proximal ciliary axoneme. May be ubiquitinated via its interaction with APC2. Post-translationally, hydroxylated at Asn-75, most probably by HIF1AN. As to expression, strongly expressed in the primary cilia of renal cells, especially in the varicosities, swellings observed in the cilia. Localizes in the node monocilia and in other 9+0 monocilia, including those of kidney epithelial cells and the pituitary gland, but it does not localize to 9+2 cilia (at protein level). In adult, it is expressed at high level in liver and kidney. Weakly or not expressed in other tissues.

Its subcellular location is the cytoplasm. The protein localises to the cytoskeleton. It is found in the membrane. The protein resides in the nucleus. It localises to the perinuclear region. Its subcellular location is the spindle. Functionally, required for normal renal development and establishment of left-right axis. Probably acts as a molecular switch between different Wnt signaling pathways. Inhibits the canonical Wnt pathway by targeting cytoplasmic disheveled (DVL1) for degradation by the ubiquitin-proteasome. This suggests that it is required in renal development to oppose the repression of terminal differentiation of tubular epithelial cells by Wnt signaling. Involved in the organization of apical junctions in kidney cells together with NPHP1, NPHP4 and RPGRIP1L/NPHP8. Does not seem to be strictly required for ciliogenesis. The polypeptide is Inversin (Invs) (Mus musculus (Mouse)).